The chain runs to 550 residues: Hydroxylamine reductase (550 aa).

Positions 3, 6, 18, and 25 each coordinate [2Fe-2S] cluster. Hybrid [4Fe-2O-2S] cluster is bound by residues H249, E273, C317, C405, C433, C458, E492, and K494. C405 is subject to Cysteine persulfide.

It belongs to the HCP family. Requires [2Fe-2S] cluster as cofactor. Hybrid [4Fe-2O-2S] cluster is required as a cofactor.

The protein localises to the cytoplasm. It carries out the reaction A + NH4(+) + H2O = hydroxylamine + AH2 + H(+). In terms of biological role, catalyzes the reduction of hydroxylamine to form NH(3) and H(2)O. The protein is Hydroxylamine reductase of Escherichia coli O7:K1 (strain IAI39 / ExPEC).